We begin with the raw amino-acid sequence, 459 residues long: ATP synthase subunit beta (459 aa).

148–155 serves as a coordination point for ATP; that stretch reads GGAGVGKT.

Belongs to the ATPase alpha/beta chains family. As to quaternary structure, F-type ATPases have 2 components, CF(1) - the catalytic core - and CF(0) - the membrane proton channel. CF(1) has five subunits: alpha(3), beta(3), gamma(1), delta(1), epsilon(1). CF(0) has three main subunits: a(1), b(2) and c(9-12). The alpha and beta chains form an alternating ring which encloses part of the gamma chain. CF(1) is attached to CF(0) by a central stalk formed by the gamma and epsilon chains, while a peripheral stalk is formed by the delta and b chains.

It is found in the cell inner membrane. The enzyme catalyses ATP + H2O + 4 H(+)(in) = ADP + phosphate + 5 H(+)(out). Functionally, produces ATP from ADP in the presence of a proton gradient across the membrane. The catalytic sites are hosted primarily by the beta subunits. The chain is ATP synthase subunit beta from Burkholderia mallei (strain NCTC 10229).